The following is a 526-amino-acid chain: Delayed-rectifier potassium channel regulatory subunit KCNS1 (526 aa).

Over 1–217 (MLMLLVRGTH…LTMENPGYSL (217 aa)) the chain is Cytoplasmic. Residues 218–239 (PSKLFSCVSISVVLASIAAMCI) form a helical membrane-spanning segment. The Extracellular portion of the chain corresponds to 240 to 270 (HSLPEYQAREAAAAVAAVAAGRSPEGVRDDP). A helical transmembrane segment spans residues 271 to 293 (VLRRLEYFCIAWFSFEVSSRLLL). Over 294-304 (APSTRNFFCHP) the chain is Cytoplasmic. A helical transmembrane segment spans residues 305–322 (LNLIDIVSVLPFYLTLLA). Topologically, residues 323-337 (GVALGDQGGKEFGHL) are extracellular. Residues 338–358 (GKVVQVFRLMRIFRVLKLARH) form a helical; Voltage-sensor membrane-spanning segment. At 359–373 (STGLRSLGATLKHSY) the chain is on the cytoplasmic side. The chain crosses the membrane as a helical span at residues 374–395 (REVGILLLYLAVGVSVFSGVAY). The Extracellular portion of the chain corresponds to 396–408 (TAEKEEDVGFNTI). Positions 409 to 420 (PACWWWGTVSMT) form an intramembrane region, helical. Positions 421-426 (TVGYGD) match the Selectivity filter motif. The stretch at 421-428 (TVGYGDVV) is an intramembrane region. Over 429–435 (PVTVAGK) the chain is Extracellular. The helical transmembrane segment at 436 to 464 (LAASGCILGGILVVALPITIIFNKFSHFY) threads the bilayer. At 465-526 (RRQKALEAAV…PSEPPHPQRY (62 aa)) the chain is on the cytoplasmic side. The tract at residues 492–526 (VSEASLETSGETSQEGRSADLESQAPSEPPHPQRY) is disordered. The span at 496-507 (SLETSGETSQEG) shows a compositional bias: polar residues.

It belongs to the potassium channel family. S (TC 1.A.1.2) subfamily. Kv9.1/KCNS1 sub-subfamily. In terms of assembly, heterotetramer with KCNB1. Heterotetramer with KCNB2. Does not form homomultimers.

It localises to the cell membrane. Its function is as follows. Potassium channel regulatory subunit that modulate the delayed rectifier voltage-gated potassium channel activity of KCNB1 and KCNB2 by altering their kinetics, expression levels, and shifting the half-inactivation potential to more polarized values. While it does not form functional channels on its own, it can form functional heterotetrameric channels with KCNB1 and KCNB2. Each regulatory subunit has unique regulatory properties that can lead to extensive inhibition, significant changes in kinetics, and/or substantial shifts in the voltage dependencies of the inactivation process. The chain is Delayed-rectifier potassium channel regulatory subunit KCNS1 from Gorilla gorilla gorilla (Western lowland gorilla).